The following is a 358-amino-acid chain: Branched-chain amino acid aminotransferase gloG (358 aa).

Arg91 contacts pyridoxal 5'-phosphate. The active-site Proton acceptor is Lys195. An N6-(pyridoxal phosphate)lysine modification is found at Lys195. Glu231 lines the pyridoxal 5'-phosphate pocket.

Belongs to the class-IV pyridoxal-phosphate-dependent aminotransferase family. Pyridoxal 5'-phosphate serves as cofactor.

The catalysed reaction is L-isoleucine + 2-oxoglutarate = (S)-3-methyl-2-oxopentanoate + L-glutamate. It carries out the reaction L-leucine + 2-oxoglutarate = 4-methyl-2-oxopentanoate + L-glutamate. The enzyme catalyses L-valine + 2-oxoglutarate = 3-methyl-2-oxobutanoate + L-glutamate. The protein operates within mycotoxin biosynthesis. Functionally, branched-chain amino acid aminotransferase; part of the gene cluster that mediates the biosynthesis of pneumocandins, lipohexapeptides of the echinocandin family that prevent fungal cell wall formation by non-competitive inhibition of beta-1,3-glucan synthase. The 10,12-dimethylmyristoyl side chain is synthesized by the reducing polyketide synthase gloL/GLPKS4. The thioesterase gloN/GLHYD exclusively interacts with gloL/GLPKS4 to maintain turnover of the polyketide side chain. The 10R,12S-dimethylmyristic acid is then transferred to the first thiolation domain of the nonribosomal peptide synthetase gloA/GLNRPS4 by the acyl-AMP ligase gloD/GLligase, followed by its acylation to L-ornithine to trigger elongation of the cyclic hexapeptide. L-ornithine, 4R-hydroxyl-L-proline (generated from L-proline by the dioxygenase gloF/GLOXY2), 3S-hydroxyl-L-homotyrosine (generated by gloG/GLHtyB, gloH/GLHtyA, gloI/GLHtyC, gloJ/GLHtyD and hydroxylated at C-3 by the dioxygenase gloM/GLOXY1), 3R-hydroxyl-L-glutamine (generated from L-glutamine probably by the dioxygenase gloE/GLOXY3) and 3S-hydroxyl-L-proline (generated from L-proline by the dioxygenase gloF/GLOXY2 to yield pneumocandin B0), or 3S-hydroxyl-4S-methyl-L-proline (generated from L-leucine by the dioxygenase gloC/GLOXY4 to yield pneumocandin A0) are sequentially added to the growing chain. The last C domain of gloA/GLNRPS4 is proposed to be responsible for cyclization by condensation to form the peptide bond between L-ornithine and 3S-hydroxyl-4S-methyl-L-proline (for pneumocandin A0) or 3S-hydroxyl-L-proline (for pneumocandin B0). Finally, the subsequent C-4 hydroxylation of 3S-hydroxyl-L-homotyrosine and L-ornithine dihydroxylation at C-4 and C-5 are performed by the cytochrome P450 monooxygenases gloP/GLP450-1 and gloO/GLP450-2, respectively. The sequence is that of Branched-chain amino acid aminotransferase gloG from Glarea lozoyensis (strain ATCC 20868 / MF5171).